The sequence spans 3726 residues: MGRSKFPGKPSKSINRKRISVLQLEDDAANPAEPQQPAPESQQPSGSGSGSSAAREKGNNCDNDEDDNAPGGASISGNTASSSAGSGNSGNGSSSGSSTGSGSSGSGSTNGGSVNGGTHHKSAANLDKEAVTKDQNGDGDKTRGNVSSAPSGKLSAAASGKALSKSSRTFSASTSVTSSGRSSGSSPDGNSGASSDGASSGISCGKSTAKSTEASSGKLAKTTGAGTCSSAKSSKASSGTTSEATTSGLSGACLKALFVATPATSTGLACALVSPGGSSQGGTFPISAALLRARKNSNKKFKNLNLARGEVMLPSTSKLKQLNSPVVDNPSPSPPIASGSTPSVEGGIGVGGVVSPGEDAALKRVLTEMPNEVARDPSPSSCTAAANGAASGKGSASNGPPAMASSGDGSSPKSGADTGPSTSSTTAKQKKTVTFRNVLETSDDKSVVKRFYNPDIRIPIVSIMKKDSLNRPLNYSRGGECIVRPSILSKILNKNSNIDKLNSLKFRSAGASSSSSNQESGSSSNVFGLSRAFGAPMDEDDEGGVTFRRNDSPEDQNNAEDDEMDDDDDDEEAEEDDENEDDNDEAVSEKSAETEKSAGADERDPDEKQLVMDSHFVLPKRSTRSSRIIKPNKRLLEEGAISTKKPLSLGDSKGKNVFGTSSSSAGSTASTFSASTNLKLGKETFFNFGTLKPNSSAAGNFVLRQPRLQFQADNQQATFTAPKACPTSPSAIPKPANSLATSSFGSLASTNSSTVTPTPSACSICSAVVSSKEVTQARKYGVVACDVCRKFFSKMTKKSISANSSTANTSSGSQQYLQCKGNEGSPCSIHSAKSQLKNFKKFYKDRCTACWLKKCMISFQLPAAHRSRLSAILPPGMRGEAAAREEKSAELLSPTGSLRFTSTASSSSPSVVASTSVKWKSSGDSTSALTSIKPNPLAENNVTFGSTPLLRPAILENPLFLKISNAADQKLAAAEAISPSLTKKNSKQEKEKVKESEQSEKLLSPTQAGTKKSGAAEAQVEEVQPQKEEAPQTSTTTQPSASNGASHGVPQAELAGETNATGDTLKRQRIDLKGPRVKHVCRSASIVLGQPLATFGEDQQPEDAADMQQEIAAPVPSAIMEPSPEKPTHIVTDENDNCASCKTSPVGDESKPSKSSGSAQAEVKKATALGKEGTASAAGGSSAKVTTRNAAVASNLIVAASKKQRNGDIATSSSVTQSSNQTQGRKTKEHRQQRTLISIDFWENYDPAEVCQTGFGLIVTETVAQRALCFLCGSTGLDPLIFCACCCEPYHQYCVQDEYNLKHGSFEDTTLMGSLLETTVNASTGPSSSLNQLTQRLNWLCPRCTVCYTCNMSSGSKVKCQKCQKNYHSTCLGTSKRLLGADRPLICVNCLKCKSCSTTKVSKFVGNLPMCTGCFKLRKKGNFCPICQRCYDDNDFDLKMMECGDCGQWVHSKCEGLSDEQYNLLSTLPESIEFICKKCARRNESSKIKAEEWRQAVMEEFKASLYSVLKLLSKSRQACALLKLSPRKKLRCTCGASSNQGKLQPKALQFSSGSDNGLGSDGESQNSDDVYEFKDQQQQQQQRNANMNKPRVKSLPCSCQQHISHSQSFSLVDIKQKIAGNSYVSLAEFNYDMSQVIQQSNCDELDIAYKELLSEQFPWFQNETKACTDALEEDMFESCSGGNYEDLQDTGGVSASVYNEHSTSQAESRSGVLDIPLEEVDDFGSCGIKMRLDTRMCLFCRKSGEGLSGEEARLLYCGHDCWVHTNCAMWSAEVFEEIDGSLQNVHSAVARGRMIKCTVCGNRGATVGCNVRSCGEHYHYPCARSIDCAFLTDKSMYCPAHAKNGNALKANGSPSVTYESNFEVSRPVYVELDRKRKKLIEPARVQFHIGSLEVRQLGAIVPRFSDSYEAVVPINFLCSRLYWSSKEPWKIVEYTVRTTIQNSSSTLTALDVGRNYTVDHTNPNSKEVQLGMAQIARWHTSLARSEFLENGGTDWSGEFPNPNSCVPPDENTEEEPQQQADLLPPELKDAIFEDLPHELLDGISMLDIFLYDDKTDLFAISEQSKDGTQAMTSNQAQNQNQQAGGANSVSICDEDTRNSNTSLGNGWPASNPVEDAMLSAARNSSQVQMLKTLAWPKLDGNSAMATAIKRRKLSKNLAEGVFLTLSSQQRNKKEMATVAGVSRRQSISETSVEGVATTSGSVRSKSFTWSAAKRYFEKSEGREEAAKMRIMQMDGVDDSITEFRIISGDGNLSTAQFSGQVKCDRCQCTYRNYDAFQRHLPSCSPTMSSNETESDVSGQGMTNNATQISAESLNELQKQLLANAGGLNYLQSATSFPQVQSLGSLGQFGLQGLQQLQLQPQSLGSGFFLSQPNPATQANTDDLQIYANSLQSLAANLGGGFTLAQPTVTAPAQPQLIAVSTNPDGTQQFIQIPQTMQATTTPTATYQTLQATNTDKKIMLPLTAAGKPLKTVATKAAQQAAVKQRQLKSGHQVKPIQAKLQPHPQQHQQQQQTQVQQPITVMGQNLLQPQLLFQSSTQTQAPQIILPQAQPQNIISFVTGDGSQGQPLQYISIPTAGEYKPQPQPTATPTFLTTAPGAGATYLQTDASGNLVLTTTPSNSGLQMLTAQSLQAQPQVIGTLIQPQTIQLGGGADGNQPGSNQQPLILGGTGGGSSGLEFATTSPQVILATQPMYYGLETIVQNTVMSSQQFVSTAMPGMLSQNASFSATTTQVFQASKIEPIVDLPAGYVVLNNTGDASSAGTFLNAASVLQQQTQDDTTTQILQNANFQFQSVPTSSGASTSMDYTSPVMVTAKIPPVTQIKRTNAQAKAAGISGVGKVPPQPQVVNKVLPTSIVTQQSQVQVKNSNLKQSQVKGKAASGTGTTCGAPPSIASKPLQKKTNMIRPIHKLEVKPKVMKPTPKVQNQNHSLLQQQQQQQPQLQQQIPAVVVNQVPKVTISQQRIPAQTQQQQLQQAQMIHIPQQQQPLQQQQVQVQPSMPIITLAEAPVVQSQFVMEPQALEQQELANRVQHFSTSSSSSSSNCSLPTNVVNPMQQQAPSTTSSSTTRPTNRVLPMQQRQEPAPLSNECPVVSSPTPPKPVEQPIIHQMTSASVSKCYAQKSTLPSPVYEAELKVSSVLESIVPDVTMDAILEEQPVTESIYTEGLYEKNSPGESKTEQLLLQQQQREQLNQQLVNNGYLLDKHTFQVEPMDTDVYREEDLEEEEDEDDDFSLKMATSACNDHEMSDSEEPAVKDKISKILDNLTNDDCADSIATATTMEVDASAGYQQMVEDVLATTAAQSAPTEEFEGALETAAVEAAATYINEMADAHVLDLKQLQNGVELELRRRKEEQRTVSQEQEQSKAAIVPTAAAPEPPQPIQEPKKMTGPHLLYEIQSEDGFTYKSSSITEIWEKVFEAVQVARRAHGLTPLPEGPLADMGGIQMIGLKTNALKYLIEQLPGVEKCSKYTPKYHKRNGNVSTAANGAHGGNLGGSSASAALSVSGGDSHGLLDYGSDQDELEENAYDCARCEPYSNRSEYDMFSWLASRHRKQPIQVFVQPSDNELVPRRGTGSNLPMAMKYRTLKETYKDYVGVFRSHIHGRGLYCTKDIEAGEMVIEYAGELIRSTLTDKRERYYDSRGIGCYMFKIDDNLVVDATMRGNAARFINHCCEPNCYSKVVDILGHKHIIIFALRRIVQGEELTYDYKFPFEDEKIPCSCGSKRCRKYLN.

4 disordered regions span residues 1 to 247 (MGRS…ATTS), 321 to 352 (QLNS…GVGG), 371 to 429 (NEVA…TAKQ), and 509 to 624 (AGAS…RSTR). Low complexity-rich tracts occupy residues 31–53 (PAEP…GSSA) and 71–101 (GGAS…STGS). The span at 102 to 115 (GSSGSGSTNGGSVN) shows a compositional bias: gly residues. A compositionally biased stretch (basic and acidic residues) spans 126-143 (LDKEAVTKDQNGDGDKTR). Residues 147–205 (SSAPSGKLSAAASGKALSKSSRTFSASTSVTSSGRSSGSSPDGNSGASSDGASSGISCG) are compositionally biased toward low complexity. Residues 206 to 215 (KSTAKSTEAS) show a composition bias toward polar residues. The segment covering 222 to 247 (TTGAGTCSSAKSSKASSGTTSEATTS) has biased composition (low complexity). Low complexity-rich tracts occupy residues 384 to 402 (AAAN…GPPA) and 509 to 525 (AGAS…SSSN). Over residues 553-586 (PEDQNNAEDDEMDDDDDDEEAEEDDENEDDNDEA) the composition is skewed to acidic residues. Residues 587-610 (VSEKSAETEKSAGADERDPDEKQL) are compositionally biased toward basic and acidic residues. Residues 759-884 (PSACSICSAV…PGMRGEAAAR (126 aa)) constitute a DNA-binding region (nuclear receptor). 4 disordered regions span residues 915 to 937 (TSVK…PNPL), 981 to 1049 (LTKK…SHGV), 1115 to 1184 (VPSA…SSAK), and 1208 to 1231 (DIAT…KEHR). Residues 918–937 (KWKSSGDSTSALTSIKPNPL) show a composition bias toward polar residues. Residues 986 to 1000 (SKQEKEKVKESEQSE) are compositionally biased toward basic and acidic residues. The segment covering 1031-1041 (PQTSTTTQPSA) has biased composition (low complexity). A compositionally biased stretch (basic and acidic residues) spans 1123–1132 (SPEKPTHIVT). Low complexity-rich tracts occupy residues 1173–1183 (GTASAAGGSSA) and 1211–1223 (TSSS…NQTQ). 3 PHD-type zinc fingers span residues 1266-1347 (RALC…CTVC), 1348-1393 (YTCN…CLKC), and 1421-1482 (GNFC…CARR). The region spanning 1496 to 1663 (AVMEEFKASL…SEQFPWFQNE (168 aa)) is the Bromo domain. Positions 1573 to 1592 (FKDQQQQQQQRNANMNKPRV) are disordered. The segment at 1734–1774 (TRMCLFCRKSGEGLSGEEARLLYCGHDCWVHTNCAMWSAEV) adopts a C2HC pre-PHD-type zinc-finger fold. The segment at 1795 to 1842 (IKCTVCGNRGATVGCNVRSCGEHYHYPCARSIDCAFLTDKSMYCPAHA) adopts a PHD-type 4 zinc-finger fold. Residues 1884 to 1941 (RVQFHIGSLEVRQLGAIVPRFSDSYEAVVPINFLCSRLYWSSKEPWKIVEYTVRTTIQ) enclose the FYR N-terminal domain. Disordered stretches follow at residues 1991–2019 (GGTD…PQQQ), 2068–2110 (TQAM…WPAS), 2283–2302 (CSPT…QGMT), 2649–2669 (GGGA…LGGT), 2866–2894 (SNLK…IASK), 3029–3096 (QHFS…PTPP), and 3347–3381 (RKEE…IQEP). Low complexity predominate over residues 2074 to 2087 (NQAQNQNQQAGGAN). Over residues 3032–3043 (STSSSSSSSNCS) the composition is skewed to low complexity. Residues 3044–3057 (LPTNVVNPMQQQAP) show a composition bias toward polar residues. The FYR C-terminal domain maps to 3386–3470 (GPHLLYEIQS…EKCSKYTPKY (85 aa)). The SET domain maps to 3588–3704 (DYVGVFRSHI…QGEELTYDYK (117 aa)). The S-adenosyl-L-methionine site is built by histidine 3598 and arginine 3600. Cysteine 3641 carries the post-translational modification S-methylcysteine; by autocatalysis. S-adenosyl-L-methionine-binding positions include tyrosine 3642 and 3665–3666 (NH). The Zn(2+) site is built by cysteine 3668, cysteine 3714, cysteine 3716, and cysteine 3721. The Post-SET domain occupies 3710-3726 (EKIPCSCGSKRCRKYLN).

It belongs to the class V-like SAM-binding methyltransferase superfamily. Histone-lysine methyltransferase family. TRX/MLL subfamily. Interacts (via SET domain) with ash1 (via SET domain). Interacts with Nup98. As to expression, maternal isoforms are expressed in syncytial blastoderm, confined to the ventral region fated to become mesoderm. An additional broad domain of expression arises during cellularization and is quickly resolved into four pair-rule-like stripes in the posterior half of the embryo.

The protein localises to the nucleus. It is found in the chromosome. The enzyme catalyses L-lysyl(9)-[histone H3] + 3 S-adenosyl-L-methionine = N(6),N(6),N(6)-trimethyl-L-lysyl(9)-[histone H3] + 3 S-adenosyl-L-homocysteine + 3 H(+). The catalysed reaction is L-cysteinyl-[protein] + S-adenosyl-L-methionine = S-methyl-L-cysteinyl-[protein] + S-adenosyl-L-homocysteine + H(+). In terms of biological role, histone methyltransferase that methylates 'Lys-4' of histone H3 (H3K4me). H3K4me represents a specific tag for epigenetic transcriptional activation. Functions in segment determination through interaction with genes of bithorax (BX-C) and antennapedia (ANT-C) complexes. Acts as an activator of BX-C. Involved in the very early regulation of homeotic genes expressed only in the posterior region of the embryo. Also has auto-methylation activity on Cys-3641. The protein is Histone-lysine N-methyltransferase trithorax of Drosophila melanogaster (Fruit fly).